Here is a 184-residue protein sequence, read N- to C-terminus: Photosystem I assembly protein Ycf4 (184 aa).

A run of 2 helical transmembrane segments spans residues 21 to 43 (NFCW…ISSY) and 68 to 90 (FYGI…NVGS).

This sequence belongs to the Ycf4 family.

Its subcellular location is the plastid. It is found in the chloroplast thylakoid membrane. Its function is as follows. Seems to be required for the assembly of the photosystem I complex. The protein is Photosystem I assembly protein Ycf4 of Physcomitrium patens (Spreading-leaved earth moss).